A 259-amino-acid polypeptide reads, in one-letter code: Large ribosomal subunit protein uL2m (259 aa).

Residues 234 to 259 (VAMNPVDHPNGGRTKTPKPERSPGVE) form a disordered region. Residues 250–259 (PKPERSPGVE) are compositionally biased toward basic and acidic residues.

Belongs to the universal ribosomal protein uL2 family.

The protein localises to the mitochondrion. The chain is Large ribosomal subunit protein uL2m (RPL2) from Paramecium tetraurelia.